Reading from the N-terminus, the 511-residue chain is Maturase K (511 aa).

The protein belongs to the intron maturase 2 family. MatK subfamily.

Its subcellular location is the plastid. It is found in the chloroplast. Usually encoded in the trnK tRNA gene intron. Probably assists in splicing its own and other chloroplast group II introns. This Lolium perenne (Perennial ryegrass) protein is Maturase K.